We begin with the raw amino-acid sequence, 100 residues long: Small ribosomal subunit protein uS14c (100 aa).

This sequence belongs to the universal ribosomal protein uS14 family. As to quaternary structure, part of the 30S ribosomal subunit.

It is found in the plastid. Functionally, binds 16S rRNA, required for the assembly of 30S particles. The sequence is that of Small ribosomal subunit protein uS14c from Aneura mirabilis (Parasitic liverwort).